The primary structure comprises 318 residues: MTPPEERQMLRETVASLVAKHAGPAAVRAAMASDRGYDESLWRLLCEQVGAAALVIPEELGGAGGELADAAIVVQELGRALVPSPLLGTTLAELALLAAAKPDAQALTELAQGSAIGALVLDPDYVVNGDIADIVVAATSGQLTRWTRFSAQPVATMDPTRRLARLQSEETEPLCPDPGIADTAAILLAAEQIGAAERCLQLTVEYAKSRVQFGRPIGSFQALKHRMADLYVTIAAARAVVADACHAPTPTNAATARLAASEALSTAAAEGIQLHGGIAITWEHDMHLYFKRAHGSAQLLESPREVLRRLESEVWESP.

Residues arginine 210 and glycine 277 each contribute to the FAD site.

It belongs to the acyl-CoA dehydrogenase family. In terms of assembly, heterotetramer composed of 2 IpdE1 subunits and 2 IpdE2 subunits. It depends on FAD as a cofactor.

It catalyses the reaction 3-[(3aS,4S,5R,7aS)-5-hydroxy-7a-methyl-1-oxo-octahydro-1H-inden-4-yl]propanoyl-CoA + A = (2E)-3-[(3aS,4S,5R,7aS)-5-hydroxy-7a-methyl-1-oxo-octahydro-1H-inden-4-yl]prop-2-enoyl-CoA + AH2. It participates in steroid metabolism; cholesterol degradation. In terms of biological role, involved in cholesterol degradation. Catalyzes the dehydrogenation of 5OH-HIP-CoA to 5OH-HIPE-CoA. Can also use octanoyl-CoA and dihydroferuloyl-CoA, with lower efficiency. Cannot use 3-oxo-4-pregnene-20-carboxyl-CoA (3-OPC-CoA). The sequence is that of Acyl-CoA dehydrogenase IpdE2 from Mycobacterium tuberculosis (strain ATCC 25618 / H37Rv).